Here is a 75-residue protein sequence, read N- to C-terminus: Peptide Ctri10036 (75 aa).

An N-terminal signal peptide occupies residues 1–22; it reads MNSKYLFVFLILNVIFIDLCQG. Position 41 is a lysine amide (Lys-41). A propeptide spanning residues 47-75 is cleaved from the precursor; sequence ELGSQYDYLQDFRKRELDLDDLLSKFPDY.

It belongs to the non-disulfide-bridged peptide (NDBP) superfamily. Short antimicrobial peptide (group 4) family. In terms of tissue distribution, expressed by the venom gland.

It localises to the secreted. The sequence is that of Peptide Ctri10036 from Chaerilus tricostatus (Scorpion).